The following is a 400-amino-acid chain: Coenzyme A biosynthesis bifunctional protein CoaBC (400 aa).

The interval 1–190 is phosphopantothenoylcysteine decarboxylase; sequence MKLNGKHIVV…SQKQDLQGLN (190 aa). The active-site Proton donor is Cys-158. Residues 191–400 are phosphopantothenate--cysteine ligase; the sequence is VSITAGPTRE…EIIERYQKTL (210 aa). CTP is bound by residues 273-275, Asp-279, Lys-289, 305-308, Phe-324, Lys-338, and Lys-342; these read GCA and PDII.

This sequence in the N-terminal section; belongs to the HFCD (homo-oligomeric flavin containing Cys decarboxylase) superfamily. In the C-terminal section; belongs to the PPC synthetase family. The cofactor is Mg(2+). FMN is required as a cofactor.

It carries out the reaction N-[(R)-4-phosphopantothenoyl]-L-cysteine + H(+) = (R)-4'-phosphopantetheine + CO2. It catalyses the reaction (R)-4'-phosphopantothenate + L-cysteine + CTP = N-[(R)-4-phosphopantothenoyl]-L-cysteine + CMP + diphosphate + H(+). It functions in the pathway cofactor biosynthesis; coenzyme A biosynthesis; CoA from (R)-pantothenate: step 2/5. Its pathway is cofactor biosynthesis; coenzyme A biosynthesis; CoA from (R)-pantothenate: step 3/5. In terms of biological role, catalyzes two sequential steps in the biosynthesis of coenzyme A. In the first step cysteine is conjugated to 4'-phosphopantothenate to form 4-phosphopantothenoylcysteine. In the second step the latter compound is decarboxylated to form 4'-phosphopantotheine. The chain is Coenzyme A biosynthesis bifunctional protein CoaBC from Haemophilus influenzae (strain ATCC 51907 / DSM 11121 / KW20 / Rd).